Consider the following 169-residue polypeptide: uncharacterized protein (169 aa).

A helical transmembrane segment spans residues 97 to 117 (IVIFCILVIVAFVIWLVVWLF). Residues 137–169 (NYSGLPTPQPTPTHYPAEQYSYDPARDRDNYRY) form a disordered region. The span at 160-169 (PARDRDNYRY) shows a compositional bias: basic and acidic residues.

It is found in the membrane. This is an uncharacterized protein from Caenorhabditis elegans.